The sequence spans 447 residues: N-succinylarginine dihydrolase (447 aa).

Residues 19 to 28 (GGLAVGNIAS), Asn110, and 137 to 138 (HR) contribute to the substrate site. The active site involves Glu174. Arg213 provides a ligand contact to substrate. His249 is an active-site residue. 2 residues coordinate substrate: Asp251 and Asn362. The active-site Nucleophile is the Cys368.

Belongs to the succinylarginine dihydrolase family. As to quaternary structure, homodimer.

It carries out the reaction N(2)-succinyl-L-arginine + 2 H2O + 2 H(+) = N(2)-succinyl-L-ornithine + 2 NH4(+) + CO2. It functions in the pathway amino-acid degradation; L-arginine degradation via AST pathway; L-glutamate and succinate from L-arginine: step 2/5. Its function is as follows. Catalyzes the hydrolysis of N(2)-succinylarginine into N(2)-succinylornithine, ammonia and CO(2). The protein is N-succinylarginine dihydrolase of Nitrosospira multiformis (strain ATCC 25196 / NCIMB 11849 / C 71).